The sequence spans 67 residues: Conotoxin TsMMSK-B022 (67 aa).

A signal peptide spans 1-22 (MMSKLGVLLTICLLLFPLTAVS). Residues 23–50 (LDGDQPADLPELRAQDFAPERSPWFDPV) constitute a propeptide that is removed on maturation. Cystine bridges form between Cys-53–Cys-65, Cys-54–Cys-61, and Cys-58–Cys-64. A 4-hydroxyproline modification is found at Pro-63.

The protein belongs to the conotoxin M superfamily. As to expression, expressed by the venom duct.

It localises to the secreted. The protein is Conotoxin TsMMSK-B022 of Conus tessulatus (Tessellate cone).